The following is a 123-amino-acid chain: Protein Wnt-7 (123 aa).

The O-palmitoleoyl serine; by PORCN moiety is linked to residue Ser-1. Cysteines 89 and 104 form a disulfide. Asn-90 is a glycosylation site (N-linked (GlcNAc...) asparagine).

Belongs to the Wnt family. In terms of processing, palmitoleoylation is required for efficient binding to frizzled receptors. Depalmitoleoylation leads to Wnt signaling pathway inhibition.

It localises to the secreted. The protein localises to the extracellular space. The protein resides in the extracellular matrix. Ligand for members of the frizzled family of seven transmembrane receptors. Probable developmental protein. May be a signaling molecule which affects the development of discrete regions of tissues. Is likely to signal over only few cell diameters. The protein is Protein Wnt-7 (WNT-7) of Evasterias troschelii (Mottled sea star).